We begin with the raw amino-acid sequence, 316 residues long: Small ribosomal subunit biogenesis GTPase RsgA (316 aa).

One can recognise a CP-type G domain in the interval 83–248 (DQYKSKLFAA…LIDSPGFQEF (166 aa)). Residues 131–134 (NKTD) and 185–193 (GQSGMGKST) contribute to the GTP site. Residues C272, C277, H279, and C285 each coordinate Zn(2+).

It belongs to the TRAFAC class YlqF/YawG GTPase family. RsgA subfamily. Monomer. Associates with 30S ribosomal subunit, binds 16S rRNA. It depends on Zn(2+) as a cofactor.

Its subcellular location is the cytoplasm. Functionally, one of several proteins that assist in the late maturation steps of the functional core of the 30S ribosomal subunit. Helps release RbfA from mature subunits. May play a role in the assembly of ribosomal proteins into the subunit. Circularly permuted GTPase that catalyzes slow GTP hydrolysis, GTPase activity is stimulated by the 30S ribosomal subunit. This Paraburkholderia phytofirmans (strain DSM 17436 / LMG 22146 / PsJN) (Burkholderia phytofirmans) protein is Small ribosomal subunit biogenesis GTPase RsgA.